Here is a 365-residue protein sequence, read N- to C-terminus: Elongation factor Tu (365 aa).

Residues 1-7 (HVDHGKT), 62-66 (DCPGH), and 117-120 (NKCD) contribute to the GTP site. The tr-type G domain maps to 1–185 (HVDHGKTTLT…ILDTYIPEPK (185 aa)). Mg(2+) is bound at residue T7.

The protein belongs to the TRAFAC class translation factor GTPase superfamily. Classic translation factor GTPase family. EF-Tu/EF-1A subfamily. As to quaternary structure, monomer.

Its subcellular location is the cytoplasm. It catalyses the reaction GTP + H2O = GDP + phosphate + H(+). In terms of biological role, GTP hydrolase that promotes the GTP-dependent binding of aminoacyl-tRNA to the A-site of ribosomes during protein biosynthesis. The protein is Elongation factor Tu of Buchnera aphidicola subsp. Melaphis rhois.